A 627-amino-acid chain; its full sequence is (R)-linalool synthase 1, chloroplastic (627 aa).

Residues 1-21 constitute a chloroplast transit peptide; that stretch reads MAFVSIAPLASRCCVHKSFVS. Mg(2+) is bound by residues Asp-378, Asp-382, and Glu-530. The short motif at 378–382 is the DDXXD motif element; sequence DDIYD.

The protein belongs to the terpene synthase family. Tpsd subfamily. Mg(2+) serves as cofactor. It depends on Mn(2+) as a cofactor.

Its subcellular location is the plastid. The protein resides in the chloroplast. It catalyses the reaction (2E)-geranyl diphosphate + H2O = (R)-linalool + diphosphate. It functions in the pathway terpene metabolism; oleoresin biosynthesis. In terms of biological role, terpene synthase (TPS) involved in the biosynthesis of monoterpene natural products included in conifer oleoresin secretions and volatile emissions; these compounds contribute to biotic and abiotic stress defense against herbivores and pathogens. Catalyzes the conversion of (2E)-geranyl diphosphate (GPP) to (R)-linalool. This Picea sitchensis (Sitka spruce) protein is (R)-linalool synthase 1, chloroplastic.